We begin with the raw amino-acid sequence, 142 residues long: MKKQSGFTLIELMIVVAIVAILAAIALPAYQTYTKKAKFTEVVSATGTYKSALEVCFQTVGSLLNCTNGTNGVPPAAGASGLVTSVAVSGNTASAATITATGDATTFGATSNVYIMTAAGSNGQIIWTAPASGSTCAGAGFC.

Residues methionine 1–glycine 6 constitute a propeptide, leader sequence. Phenylalanine 7 carries the post-translational modification N-methylphenylalanine. The helical transmembrane segment at phenylalanine 7–leucine 27 threads the bilayer.

This sequence belongs to the N-Me-Phe pilin family.

It localises to the membrane. Functionally, major component of the type IV (TAP) pilus. Aeromonas hydrophila possesses two distinct families of type IV pili: the bundle-forming pilus (Bfp) and the type IV pilus (Tap). In Aeromonas hydrophila, this protein is Type IV pilus subunit protein TapA (tapA).